Reading from the N-terminus, the 166-residue chain is Thioredoxin, mitochondrial (166 aa).

The N-terminal 59 residues, 1–59 (MAQRLLLRRFLTSIISGKPSQSRWAPVASRALQTPQYSPGYLTVTPSQARSIYTTRVCS), are a transit peptide targeting the mitochondrion. Residues 61–166 (TFNIQDGPDF…LEAFLKKLIG (106 aa)) enclose the Thioredoxin domain. Residues Cys90 and Cys93 each act as nucleophile in the active site. A disulfide bridge links Cys90 with Cys93. N6-acetyllysine; alternate is present on Lys152. Residue Lys152 is modified to N6-succinyllysine; alternate.

Belongs to the thioredoxin family. As to quaternary structure, monomer.

The protein localises to the mitochondrion. Its function is as follows. Important for the control of mitochondrial reactive oxygen species homeostasis, apoptosis regulation and cell viability. Is involved in various redox reactions including the reduction of protein disulfide bonds, through the reversible oxidation of its active center dithiol to a disulfide. The polypeptide is Thioredoxin, mitochondrial (TXN2) (Bos taurus (Bovine)).